The following is a 429-amino-acid chain: Ribosomal RNA small subunit methyltransferase B (429 aa).

S-adenosyl-L-methionine is bound by residues 254-260 (CAAPGGK), Asp277, Asp303, and Asp322. Cys375 functions as the Nucleophile in the catalytic mechanism. A disordered region spans residues 397–419 (ALSETGTPDQPGQQNLPGGEEGD). A compositionally biased stretch (polar residues) spans 400 to 412 (ETGTPDQPGQQNL).

It belongs to the class I-like SAM-binding methyltransferase superfamily. RsmB/NOP family.

It localises to the cytoplasm. It carries out the reaction cytidine(967) in 16S rRNA + S-adenosyl-L-methionine = 5-methylcytidine(967) in 16S rRNA + S-adenosyl-L-homocysteine + H(+). Specifically methylates the cytosine at position 967 (m5C967) of 16S rRNA. The sequence is that of Ribosomal RNA small subunit methyltransferase B from Salmonella choleraesuis (strain SC-B67).